The chain runs to 302 residues: Probable 2-(5''-triphosphoribosyl)-3'-dephosphocoenzyme-A synthase 1 (302 aa).

This sequence belongs to the CitG/MdcB family.

It catalyses the reaction 3'-dephospho-CoA + ATP = 2'-(5''-triphospho-alpha-D-ribosyl)-3'-dephospho-CoA + adenine. The sequence is that of Probable 2-(5''-triphosphoribosyl)-3'-dephosphocoenzyme-A synthase 1 from Salmonella typhi.